The chain runs to 308 residues: UPF0282 protein M164_2122 (308 aa).

It belongs to the UPF0282 family.

This is UPF0282 protein M164_2122 from Saccharolobus islandicus (strain M.16.4 / Kamchatka #3) (Sulfolobus islandicus).